The primary structure comprises 65 residues: Putative antitoxin PF2058 (65 aa).

This sequence belongs to the UPF0165 family.

Its function is as follows. Possibly the antitoxin component of a type II toxin-antitoxin (TA) system. This is Putative antitoxin PF2058 from Pyrococcus furiosus (strain ATCC 43587 / DSM 3638 / JCM 8422 / Vc1).